The following is a 451-amino-acid chain: UPF0210 protein Asuc_1169 (451 aa).

Belongs to the UPF0210 family. Homodimer.

In Actinobacillus succinogenes (strain ATCC 55618 / DSM 22257 / CCUG 43843 / 130Z), this protein is UPF0210 protein Asuc_1169.